We begin with the raw amino-acid sequence, 215 residues long: Cytochrome b6 (215 aa).

A helical membrane pass occupies residues 32–52 (IFYCLGGITLTCFIIQVATGF). Cysteine 35 serves as a coordination point for heme c. The heme b site is built by histidine 86 and histidine 100. The next 3 membrane-spanning stretches (helical) occupy residues 90-110 (ASMM…TGGF), 116-136 (LTWV…VTGY), and 186-206 (LHTF…FLMI). Residues histidine 187 and histidine 202 each contribute to the heme b site.

Belongs to the cytochrome b family. PetB subfamily. The 4 large subunits of the cytochrome b6-f complex are cytochrome b6, subunit IV (17 kDa polypeptide, PetD), cytochrome f and the Rieske protein, while the 4 small subunits are PetG, PetL, PetM and PetN. The complex functions as a dimer. Heme b is required as a cofactor. It depends on heme c as a cofactor.

The protein localises to the plastid. It localises to the chloroplast thylakoid membrane. In terms of biological role, component of the cytochrome b6-f complex, which mediates electron transfer between photosystem II (PSII) and photosystem I (PSI), cyclic electron flow around PSI, and state transitions. In Zygnema circumcarinatum (Green alga), this protein is Cytochrome b6.